Here is a 138-residue protein sequence, read N- to C-terminus: MCWGRSWTFGRSSSKGWRPTSSASSYDEHRADLSTLADEMVDLASQGRDGLEVDRAFHLKLMEPLGNDLILQLTEAFWQVQAIVAPTLRTEPEDRLITAQRHRAIVDAATAGDPEALRSAIADHYAPIRTSIARAVQS.

The interval 1–25 (MCWGRSWTFGRSSSKGWRPTSSASS) is disordered. Residues 9-25 (FGRSSSKGWRPTSSASS) are compositionally biased toward polar residues.

In terms of biological role, may serve as a transcriptional regulator. The sequence is that of Putative transcriptional regulatory protein NedR (nedR) from Micromonospora viridifaciens.